Consider the following 364-residue polypeptide: 3-dehydroquinate synthase (364 aa).

Residues 71 to 76 (DGEQYK), 105 to 109 (GVIGD), 129 to 130 (TT), Lys142, Lys151, and 169 to 172 (CLKT) each bind NAD(+). Zn(2+) contacts are provided by Glu184, His247, and His264.

This sequence belongs to the sugar phosphate cyclases superfamily. Dehydroquinate synthase family. The cofactor is Co(2+). It depends on Zn(2+) as a cofactor. NAD(+) serves as cofactor.

The protein localises to the cytoplasm. The catalysed reaction is 7-phospho-2-dehydro-3-deoxy-D-arabino-heptonate = 3-dehydroquinate + phosphate. Its pathway is metabolic intermediate biosynthesis; chorismate biosynthesis; chorismate from D-erythrose 4-phosphate and phosphoenolpyruvate: step 2/7. Catalyzes the conversion of 3-deoxy-D-arabino-heptulosonate 7-phosphate (DAHP) to dehydroquinate (DHQ). In Klebsiella pneumoniae (strain 342), this protein is 3-dehydroquinate synthase.